A 92-amino-acid polypeptide reads, in one-letter code: Small ribosomal subunit protein uS19 (92 aa).

The protein belongs to the universal ribosomal protein uS19 family.

Protein S19 forms a complex with S13 that binds strongly to the 16S ribosomal RNA. The protein is Small ribosomal subunit protein uS19 of Thermobifida fusca (strain YX).